Consider the following 60-residue polypeptide: Cytotoxin 1 (60 aa).

4 disulfides stabilise this stretch: Cys3-Cys21, Cys14-Cys38, Cys42-Cys53, and Cys54-Cys59.

This sequence belongs to the three-finger toxin family. Short-chain subfamily. Type IA cytotoxin sub-subfamily. As to quaternary structure, monomer in solution; Homodimer and oligomer in the presence of negatively charged lipids forming a pore with a size ranging between 20 and 30 angstroms. As to expression, expressed by the venom gland.

It localises to the secreted. Its subcellular location is the target cell membrane. Functionally, basic protein that binds to cell membrane and depolarizes cardiomyocytes. This cytotoxin also possesses lytic activity on many other cells, including red blood cells. Interaction with sulfatides in the cell membrane induces pore formation and cell internalization and is responsible for cytotoxicity in cardiomyocytes. It targets the mitochondrial membrane and induces mitochondrial swelling and fragmentation. Inhibits protein kinases C. It binds to the integrin alpha-V/beta-3 with a moderate affinity. This Naja pallida (Red spitting cobra) protein is Cytotoxin 1.